The sequence spans 359 residues: Dihydroorotate dehydrogenase (quinone) (359 aa).

FMN-binding positions include 68-72 and Ala92; that span reads AGFDK. Residue Lys72 participates in substrate binding. 117 to 121 is a binding site for substrate; sequence NAYGF. Residues Asn146 and Asn179 each coordinate FMN. Asn179 contacts substrate. Ser182 functions as the Nucleophile in the catalytic mechanism. Asn184 contributes to the substrate binding site. FMN-binding residues include Lys215 and Thr243. 244 to 245 contacts substrate; it reads NT. FMN contacts are provided by residues Gly263, Gly292, and 313–314; that span reads YT.

It belongs to the dihydroorotate dehydrogenase family. Type 2 subfamily. Monomer. Requires FMN as cofactor.

It is found in the cell membrane. It catalyses the reaction (S)-dihydroorotate + a quinone = orotate + a quinol. It participates in pyrimidine metabolism; UMP biosynthesis via de novo pathway; orotate from (S)-dihydroorotate (quinone route): step 1/1. Its function is as follows. Catalyzes the conversion of dihydroorotate to orotate with quinone as electron acceptor. This is Dihydroorotate dehydrogenase (quinone) from Nautilia profundicola (strain ATCC BAA-1463 / DSM 18972 / AmH).